The chain runs to 884 residues: Probable ribonuclease ZC3H12C (884 aa).

Residues 66-108 (KPTMDTVNSGKEGKGVSEENVSSGDSEGSTSSDHESEQLSSLS) form a disordered region. The span at 87-96 (SSGDSEGSTS) shows a compositional bias: low complexity. Residue Ser231 is modified to Phosphoserine. One can recognise an RNase NYN domain in the interval 246 to 401 (LRPVVIDGSN…LGRHGPSLDN (156 aa)). The segment at 411–436 (EHKKQPCPYGKKCTYGHKCKYYHPER) adopts a C3H1-type zinc-finger fold. Residues 456-478 (AAKTTNEGGLVKSNSVPCSTKAD) show a composition bias toward polar residues. 3 disordered regions span residues 456–548 (AAKT…SGVH), 716–739 (VGAR…KAPH), and 755–776 (SRLY…EGLG). Positions 500-516 (VYQDIEEKLPTKNKLET) are enriched in basic and acidic residues. Over residues 518-543 (SVPSLVSIPATSTAKPQSTTPLSNGL) the composition is skewed to polar residues.

It belongs to the ZC3H12 family. The cofactor is Mg(2+).

In terms of biological role, may function as RNase and regulate the levels of target RNA species. This Mus musculus (Mouse) protein is Probable ribonuclease ZC3H12C (Zc3h12c).